The following is a 399-amino-acid chain: Proteinase-activated receptor 2 (399 aa).

Positions Met1–Thr25 are cleaved as a signal peptide. The propeptide at Glu26–Arg38 is removed for receptor activation. An N-linked (GlcNAc...) asparagine glycan is attached at Asn33. Residues Ser39–Gly73 are Extracellular-facing. The chain crosses the membrane as a helical span at residues Lys74–Leu103. Topologically, residues Phe104–His110 are cytoplasmic. A helical membrane pass occupies residues Pro111–His139. At Gly140–Lys151 the chain is on the extracellular side. An intrachain disulfide couples Cys150 to Cys228. The helical transmembrane segment at Val152–Ile179 threads the bilayer. The Cytoplasmic portion of the chain corresponds to Val180–His185. A helical membrane pass occupies residues Pro186–Val213. Residues Met214–Leu237 lie on the Extracellular side of the membrane. N-linked (GlcNAc...) asparagine glycosylation is present at Asn224. A helical membrane pass occupies residues Val238 to Leu271. Residues Arg272–His279 are Cytoplasmic-facing. Residues Ser280–Gln319 form a helical membrane-spanning segment. Residues Arg320–Tyr325 are Extracellular-facing. A helical membrane pass occupies residues Ala326 to Val349. Residues Ser350–Tyr399 are Cytoplasmic-facing. Cys363 carries the S-palmitoyl cysteine lipid modification.

It belongs to the G-protein coupled receptor 1 family. As to quaternary structure, interacts with TLR4, COPS5 and TMED2. Interacts with GNAQ, GNA11, GNA12, GNA13 and GNA14. A proteolytic cleavage generates a new N-terminus that functions as a tethered ligand. Activating serine proteases include trypsin, mast cell tryptase, coagulation factors VII and Xa, myeloblastin/PRTN3 and membrane-type serine protease 1/ST14. Proposed subsequent cleavage by serine proteases is leading to receptor deactivation and include neutrophil elastase and cathepsin G. At least in part, implicated proteases are also shown to activate the receptor; the glycosylation status of the receptor is thought to contribute to the difference. In terms of processing, N-glycosylated and sialylated. Post-translationally, multiple phosphorylated on serine and threonine residues in the cytoplasmic region upon receptor activation; required for receptor desensitization and recruitment of beta-arrestin. Monoubiquitinated by Cbl at the plasma membrane and in early endosomes; not required for receptor endocytosis but for translocation to late endosomes or lysosomes. Deubiquitination involves Stambp and Usp8; required for lysosomal trafficking and receptor degradation.

It is found in the cell membrane. Functionally, receptor for trypsin and trypsin-like enzymes coupled to G proteins. Its function is mediated through the activation of several signaling pathways including phospholipase C (PLC), intracellular calcium, mitogen-activated protein kinase (MAPK), I-kappaB kinase/NF-kappaB and Rho. Can also be transactivated by cleaved F2r/Par1. Involved in modulation of inflammatory responses and regulation of innate and adaptive immunity, and acts as a sensor for proteolytic enzymes generated during infection. Generally is promoting inflammation. Can signal synergistically with Tlr4 and probably Tlr2 in inflammatory responses and modulates Tlr3 signaling. Has a protective role in establishing the endothelial barrier; the activity involves coagulation factor X. Regulates endothelial cell barrier integrity during neutrophil extravasation, probably following proteolytic cleavage by PRTN3. Proposed to have a bronchoprotective role in airway epithelium, but also shown to compromise the airway epithelial barrier by interrupting E-cadherin adhesion. Involved in the regulation of vascular tone; activation results in hypotension presumably mediated by vasodilation. Associates with a subset of G proteins alpha subunits such as GNAQ, GNA11, GNA14, GNA12 and GNA13, but probably not with G(o)-alpha, G(i) subunit alpha-1 and G(i) subunit alpha-2. Believed to be a class B receptor which internalizes as a complex with arrestin and traffic with it to endosomal vesicles, presumably as desensitized receptor, for extended periods of time. Mediates inhibition of TNF-alpha stimulated JNK phosphorylation via coupling to GNAQ and GNA11; the function involves dissociation of Ripk1 and Tradd from Tnfr1. Mediates phosphorylation of nuclear factor NF-kappa-B RELA subunit at 'Ser-536'; the function involves Ikbkb and is predominantly independent of G proteins. Involved in cellular migration. Involved in cytoskeletal rearrangement and chemotaxis through beta-arrestin-promoted scaffolds; the function is independent of GNAQ and GNA11 and involves promotion of cofilin dephosphorylation and actin filament severing. Induces redistribution of Cops5 from the plasma membrane to the cytosol and activation of the JNK cascade is mediated by Cops5. Involved in the recruitment of leukocytes to the sites of inflammation and is the major PAR receptor capable of modulating eosinophil function such as pro-inflammatory cytokine secretion, superoxide production and degranulation. During inflammation promotes dendritic cell maturation, trafficking to the lymph nodes and subsequent T-cell activation. Involved in antimicrobial response of innate immune cells; activation enhances phagocytosis of Gram-positive and killing of Gram-negative bacteria. Acts synergistically with interferon-gamma in enhancing antiviral responses. Mediates activation of pro-inflammatory and pro-fibrotic responses in fibroblasts, triggered by coagulation factor Xa (F10). Probably mediates activation of barrier protective signaling responses in endothelial cells, triggered by coagulation factor Xa (F10). The protein is Proteinase-activated receptor 2 (F2rl1) of Mus musculus (Mouse).